The primary structure comprises 138 residues: Putative pre-16S rRNA nuclease (138 aa).

This sequence belongs to the YqgF nuclease family.

The protein resides in the cytoplasm. In terms of biological role, could be a nuclease involved in processing of the 5'-end of pre-16S rRNA. The polypeptide is Putative pre-16S rRNA nuclease (Clostridium tetani (strain Massachusetts / E88)).